An 88-amino-acid chain; its full sequence is Beta-insect excitatory toxin BmKIT1 (88 aa).

The first 18 residues, 1-18, serve as a signal peptide directing secretion; that stretch reads MKFFLIFLVIFPIMGVLG. In terms of domain architecture, LCN-type CS-alpha/beta spans 20-83; it reads KNGYAVDSSG…IKDATKSYCD (64 aa). Disulfide bonds link cysteine 34/cysteine 55, cysteine 40/cysteine 60, cysteine 44/cysteine 62, and cysteine 56/cysteine 82. Isoleucine amide is present on isoleucine 87.

This sequence belongs to the long (4 C-C) scorpion toxin superfamily. Sodium channel inhibitor family. Beta subfamily. Expressed by the venom gland.

It localises to the secreted. In terms of biological role, excitatory insect beta-toxins induce a spastic paralysis. They bind voltage-independently at site-4 of sodium channels (Nav) and shift the voltage of activation toward more negative potentials thereby affecting sodium channel activation and promoting spontaneous and repetitive firing. This toxin is active only on insects. The polypeptide is Beta-insect excitatory toxin BmKIT1 (Olivierus martensii (Manchurian scorpion)).